Consider the following 416-residue polypeptide: 4-hydroxy-3-methylbut-2-en-1-yl diphosphate synthase (flavodoxin) (416 aa).

Positions 304, 307, 350, and 357 each coordinate [4Fe-4S] cluster.

The protein belongs to the IspG family. [4Fe-4S] cluster is required as a cofactor.

It carries out the reaction (2E)-4-hydroxy-3-methylbut-2-enyl diphosphate + oxidized [flavodoxin] + H2O + 2 H(+) = 2-C-methyl-D-erythritol 2,4-cyclic diphosphate + reduced [flavodoxin]. Its pathway is isoprenoid biosynthesis; isopentenyl diphosphate biosynthesis via DXP pathway; isopentenyl diphosphate from 1-deoxy-D-xylulose 5-phosphate: step 5/6. In terms of biological role, converts 2C-methyl-D-erythritol 2,4-cyclodiphosphate (ME-2,4cPP) into 1-hydroxy-2-methyl-2-(E)-butenyl 4-diphosphate. This Burkholderia pseudomallei (strain K96243) protein is 4-hydroxy-3-methylbut-2-en-1-yl diphosphate synthase (flavodoxin).